A 494-amino-acid polypeptide reads, in one-letter code: MELNLLLVIIILVATYTVSLLNKQWRKPKSQQKQPPKLPVIGHLHLLWGGLPPQHLLRSIAREYGPVAHVQLGEVYSVVLSSAEAAKQAMKVLDPNFADRFDSVGSRIMWYDNDDIIFSPYNDHWHQMRKICVSELLSPKNVRSFGFIRQEEIERLIRVMKQSEGAPVDVTEEVSKMSCFVVCRAAFGSVLKDQGSLAELVKESLAMASGFELKDLYPSSWLLNLLSFNNYRLKRMRRRLDHVLDGFLEEHRVKKNGEFGGEDIVDVLFRMQKDSNIKIPITSNGIKGFIFNTFSAGAEASSTTISWALSELMRNPAKMAKVQAEVREALKGKTSVDLSEMQELKYMRSVVKETLRLHPPFPLIPRQSREECEINGFYIPARTRILINAWSIGRDPLYWEDPDTFRPERFDEVSRDFMGNDFEFIPFGAGQRICPGLHFGLANVEIPLAQLLYHFDWKLPQGMTDADLYVAGTPGLSGPRKKNVFLVPTIHKSR.

The chain crosses the membrane as a helical; Signal-anchor for type II membrane protein span at residues 1 to 21 (MELNLLLVIIILVATYTVSLL). Cysteine 434 provides a ligand contact to heme.

Belongs to the cytochrome P450 family. It depends on heme as a cofactor.

The protein resides in the endoplasmic reticulum membrane. Functionally, cytochrome P450 oxygenase of undefined substrate. Not active with limonene, (+)- or (-)-piperitone, (-)-isopiperitone, piperitenone or (+)-pulegone. This Mentha gracilis (Gingermint) protein is Cytochrome P450 71D94 (CYP71D94).